A 402-amino-acid polypeptide reads, in one-letter code: Sulfate adenylyltransferase (402 aa).

It belongs to the sulfate adenylyltransferase family.

It carries out the reaction sulfate + ATP + H(+) = adenosine 5'-phosphosulfate + diphosphate. The protein operates within sulfur metabolism; hydrogen sulfide biosynthesis; sulfite from sulfate: step 1/3. The chain is Sulfate adenylyltransferase from Ruthia magnifica subsp. Calyptogena magnifica.